The chain runs to 36 residues: Toxin Iob1 (36 aa).

3 cysteine pairs are disulfide-bonded: Cys-6–Cys-21, Cys-13–Cys-26, and Cys-20–Cys-33.

It is found in the secreted. Its function is as follows. Binds reversibly and blocks N-type voltage-gated calcium channels (Cav). The polypeptide is Toxin Iob1 (Isyndus obscurus (Assassin bug)).